Consider the following 431-residue polypeptide: Glutamyl-tRNA(Gln) amidotransferase subunit A (431 aa).

Catalysis depends on charge relay system residues lysine 37 and serine 112. Serine 136 acts as the Acyl-ester intermediate in catalysis.

This sequence belongs to the amidase family. GatA subfamily. In terms of assembly, heterotrimer of A, B and C subunits.

It catalyses the reaction L-glutamyl-tRNA(Gln) + L-glutamine + ATP + H2O = L-glutaminyl-tRNA(Gln) + L-glutamate + ADP + phosphate + H(+). In terms of biological role, allows the formation of correctly charged Gln-tRNA(Gln) through the transamidation of misacylated Glu-tRNA(Gln) in organisms which lack glutaminyl-tRNA synthetase. The reaction takes place in the presence of glutamine and ATP through an activated gamma-phospho-Glu-tRNA(Gln). This Methanospirillum hungatei JF-1 (strain ATCC 27890 / DSM 864 / NBRC 100397 / JF-1) protein is Glutamyl-tRNA(Gln) amidotransferase subunit A.